A 226-amino-acid polypeptide reads, in one-letter code: Nucleoside triphosphate pyrophosphatase (226 aa).

Asp79 acts as the Proton acceptor in catalysis. Residues 204 to 226 (WSRGTSTHPTPGTSATPKPNPGA) are disordered. The span at 206–220 (RGTSTHPTPGTSATP) shows a compositional bias: polar residues.

Belongs to the Maf family. It depends on a divalent metal cation as a cofactor.

The protein localises to the cytoplasm. The catalysed reaction is a ribonucleoside 5'-triphosphate + H2O = a ribonucleoside 5'-phosphate + diphosphate + H(+). The enzyme catalyses a 2'-deoxyribonucleoside 5'-triphosphate + H2O = a 2'-deoxyribonucleoside 5'-phosphate + diphosphate + H(+). Nucleoside triphosphate pyrophosphatase. May have a dual role in cell division arrest and in preventing the incorporation of modified nucleotides into cellular nucleic acids. The polypeptide is Nucleoside triphosphate pyrophosphatase (Salinispora tropica (strain ATCC BAA-916 / DSM 44818 / JCM 13857 / NBRC 105044 / CNB-440)).